A 1804-amino-acid polypeptide reads, in one-letter code: Collagen alpha-1(XI) chain (1804 aa).

The first 34 residues, 1-34 (MEPWSRWKTKRWIWDLTISTLVLTFLFQAREVRG), serve as a signal peptide directing secretion. Residues 35 to 511 (AAPVDILKAL…SKGPTISAQE (477 aa)) constitute a propeptide, N-terminal propeptide. 2 cysteine pairs are disulfide-bonded: Cys-60/Cys-242 and Cys-181/Cys-235. A Laminin G-like domain is found at 70-242 (DIAYRVTEEA…DYCDHYSPDC (173 aa)). The tract at residues 229 to 417 (KAAYDYCDHY…DFTETSINGH (189 aa)) is nonhelical region. Asn-351 is a glycosylation site (N-linked (GlcNAc...) asparagine). The triple-helical region (interrupted) stretch occupies residues 418-506 (GAYGEKGQKG…YGGDGSKGPT (89 aa)). Residues 437-506 (LVEGPPGPAG…YGGDGSKGPT (70 aa)) form a disordered region. One can recognise a Collagen-like 1 domain in the interval 440–488 (GPPGPAGPAGLMGPPGLQGPSGLPGDPGDRGPPGRPGLPGADGLPGPPG). Composition is skewed to low complexity over residues 447 to 465 (PAGL…LPGD) and 477 to 494 (LPGA…LMLP). The short nonhelical segment stretch occupies residues 507–509 (ISA). Residues 510–527 (QEAQAQAILQQARIALRG) are telopeptide. Residues 526–1560 (RGPPGPMGLT…KTRRHTESIQ (1035 aa)) are disordered. The interval 528-1540 (PPGPMGLTGR…PGPPGPPGEV (1013 aa)) is triple-helical region. Collagen-like domains are found at residues 530 to 584 (GPMG…GADG), 581 to 639 (GADG…EIGP), 607 to 664 (PGDK…PGQP), and 641 to 698 (GLPG…GPQG). Gly residues-rich tracts occupy residues 539-548 (GPVGGPGSAG) and 581-590 (GADGGRGMPG). Lys-610 carries the allysine modification. Over residues 639 to 655 (PRGLPGEAGPRGLLGPR) the composition is skewed to low complexity. Over residues 697–708 (QGLPGPQGPIGP) the composition is skewed to pro residues. A compositionally biased stretch (low complexity) spans 715–726 (QGKPGLAGLPGA). The region spanning 746–804 (GPPGPQGPIGYPGPRGVKGADGVRGLKGSKGEKGEDGFPGFKGDMGLKGDRGEVGQVGP) is the Collagen-like 6 domain. Positions 805-814 (RGEDGPEGPK) are enriched in basic and acidic residues. 3 stretches are compositionally biased toward low complexity: residues 873–901 (KPGP…PGPK), 916–925 (RGPQGPQGPV), and 969–979 (PQGPTGETGPI). The span at 1040-1049 (GLKGGEGPQG) shows a compositional bias: gly residues. Positions 1074–1083 (RPGPQGPPGP) are enriched in pro residues. The span at 1084–1108 (AGEKGAPGEKGPQGPAGRDGVQGPV) shows a compositional bias: low complexity. The segment covering 1160-1169 (GIAGGDGEAG) has biased composition (gly residues). Composition is skewed to pro residues over residues 1216–1227 (MGPPGPPGPRGP) and 1341–1360 (QPGP…PGKR). 2 stretches are compositionally biased toward low complexity: residues 1383 to 1392 (AEGPPGKTGP) and 1417 to 1426 (QGLPGAAGQD). 3 Collagen-like domains span residues 1391-1449 (GPVG…SKGE), 1442-1492 (GDPG…PGPA), and 1481-1539 (GAKG…PPGE). A compositionally biased stretch (pro residues) spans 1428 to 1437 (PPGPLGPPGL). Lys-1450 is modified (allysine). Residues 1453–1462 (PGLIGLIGPP) show a composition bias toward low complexity. Positions 1481–1490 (GAKGDGGIPG) are enriched in gly residues. A compositionally biased stretch (pro residues) spans 1491-1507 (PAGPIGPPGPPGLPGPA). A compositionally biased stretch (low complexity) spans 1509 to 1519 (PKGNKGSSGPT). Positions 1528–1537 (PGPPGPPGPP) are enriched in pro residues. A nonhelical region (C-terminal) region spans residues 1541–1561 (IQPLPILSPKKTRRHTESIQA). Positions 1562–1804 (DAGDNILDYS…FEVGPACFLG (243 aa)) are cleaved as a propeptide — C-terminal propeptide. One can recognise a Fibrillar collagen NC1 domain in the interval 1575-1803 (EEIFGSLNSL…GFEVGPACFL (229 aa)). A disulfide bridge connects residues Cys-1605 and Cys-1637. Ca(2+) contacts are provided by Asp-1623, Asn-1625, Gln-1626, Cys-1628, and Asp-1631. Asn-1638 and Asn-1707 each carry an N-linked (GlcNAc...) asparagine glycan. 2 cysteine pairs are disulfide-bonded: Cys-1646-Cys-1801 and Cys-1712-Cys-1755.

This sequence belongs to the fibrillar collagen family. In terms of assembly, trimers composed of three different chains: alpha 1(XI), alpha 2(XI), and alpha 3(XI). Alpha 3(XI) is probably a post-translational modification of alpha 1(II). In terms of processing, prolines at the third position of the tripeptide repeating unit (G-X-Y) are hydroxylated in some or all of the chains. N-glycosylated.

Its subcellular location is the secreted. The protein localises to the extracellular space. It is found in the extracellular matrix. Its function is as follows. May play an important role in fibrillogenesis by controlling lateral growth of collagen II fibrils. This chain is Collagen alpha-1(XI) chain (Col11a1), found in Rattus norvegicus (Rat).